The chain runs to 310 residues: 2-phospho-L-lactate transferase (310 aa).

Positions 50 and 89 each coordinate 7,8-didemethyl-8-hydroxy-5-deazariboflavin.

This sequence belongs to the CofD family. As to quaternary structure, homodimer. Mg(2+) is required as a cofactor.

It catalyses the reaction (2S)-lactyl-2-diphospho-5'-guanosine + 7,8-didemethyl-8-hydroxy-5-deazariboflavin = oxidized coenzyme F420-0 + GMP + H(+). It participates in cofactor biosynthesis; coenzyme F420 biosynthesis. Catalyzes the transfer of the 2-phospholactate moiety from (2S)-lactyl-2-diphospho-5'-guanosine to 7,8-didemethyl-8-hydroxy-5-deazariboflavin (FO) with the formation of oxidized coenzyme F420-0 and GMP. This is 2-phospho-L-lactate transferase from Methanopyrus kandleri (strain AV19 / DSM 6324 / JCM 9639 / NBRC 100938).